The sequence spans 440 residues: Beta-1,3-galactosyl-O-glycosyl-glycoprotein beta-1,6-N-acetylglucosaminyltransferase (440 aa).

Over 1 to 9 the chain is Cytoplasmic; the sequence is MKMAGWKKK. The chain crosses the membrane as a helical; Signal-anchor for type II membrane protein span at residues 10–30; sequence LCPGHHLWALGCYMLLAVVSL. The Lumenal portion of the chain corresponds to 31–440; it reads RLSLRFKCDV…RHKAIYGTEL (410 aa). N-linked (GlcNAc...) asparagine; by host glycans are attached at residues Asn72 and Asn108. 4 disulfides stabilise this stretch: Cys73–Cys230, Cys164–Cys384, Cys185–Cys212, and Cys393–Cys425.

The protein belongs to the glycosyltransferase 14 family.

The protein resides in the host Golgi apparatus membrane. The enzyme catalyses a 3-O-[beta-D-galactosyl-(1-&gt;3)-N-acetyl-alpha-D-galactosaminyl]-L-seryl-[protein] + UDP-N-acetyl-alpha-D-glucosamine = 3-O-{beta-D-galactosyl-(1-&gt;3)-[N-acetyl-beta-D-glucosaminyl-(1-&gt;6)]-N-acetyl-alpha-D-galactosaminyl}-L-seryl-[protein] + UDP + H(+). It carries out the reaction a 3-O-[beta-D-galactosyl-(1-&gt;3)-N-acetyl-alpha-D-galactosaminyl]-L-threonyl-[protein] + UDP-N-acetyl-alpha-D-glucosamine = a 3-O-{beta-D-galactosyl-(1-&gt;3)-[N-acetyl-beta-D-glucosaminyl-(1-&gt;6)]-N-acetyl-alpha-D-galactosaminyl}-L-threonyl-[protein] + UDP + H(+). It catalyses the reaction a beta-D-Gal-(1-&gt;4)-beta-D-GlcNAc-(1-&gt;3)-beta-D-Gal-(1-&gt;4)-beta-D-GlcNAc derivative + UDP-N-acetyl-alpha-D-glucosamine = a beta-D-Gal-(1-&gt;4)-beta-D-GlcNAc-(1-&gt;3)-[beta-D-GlcNAc-(1-&gt;6)]-beta-D-Gal-(1-&gt;4)-N-acetyl-beta-D-glucosaminyl derivative + UDP + H(+). The catalysed reaction is 3-O-[N-acetyl-beta-D-glucosaminyl-(1-&gt;3)-N-acetyl-alpha-D-galactosaminyl]-L-seryl-[protein] + UDP-N-acetyl-alpha-D-glucosamine = 3-O-[N-acetyl-beta-D-glucosaminyl-(1-&gt;3)-[N-acetyl-beta-D-glucosaminyl-(1-&gt;6)]-N-acetyl-alpha-D-galactosaminyl]-L-seryl-[protein] + UDP + H(+). The enzyme catalyses a 3-O-[N-acetyl-beta-D-glucosaminyl-(1-&gt;3)-N-acetyl-alpha-D-galactosaminyl]-L-threonyl-[protein] + UDP-N-acetyl-alpha-D-glucosamine = 3-O-[N-acetyl-beta-D-glucosaminyl-(1-&gt;3)-[N-acetyl-beta-D-glucosaminyl-(1-&gt;6)]-N-acetyl-alpha-D-galactosaminyl]-L-threonyl-[protein] + UDP + H(+). The protein operates within protein modification; protein glycosylation. Its function is as follows. Non-essential glycosyltransferase that can synthesize all known mucin beta 6 N-acetylglucosaminides. Mediates core 2 and core 4 O-glycan branching, 2 important steps in mucin-type biosynthesis. Has also I-branching enzyme activity by converting linear into branched poly-N-acetyllactosaminoglycans. Contributes to the post-translational modifications of structural proteins. This is Beta-1,3-galactosyl-O-glycosyl-glycoprotein beta-1,6-N-acetylglucosaminyltransferase (Bo17) from Bovine herpesvirus 4 (strain V. test) (BoHV-4).